Consider the following 568-residue polypeptide: 2-succinyl-5-enolpyruvyl-6-hydroxy-3-cyclohexene-1-carboxylate synthase (568 aa).

The protein belongs to the TPP enzyme family. MenD subfamily. In terms of assembly, homodimer. The cofactor is Mg(2+). It depends on Mn(2+) as a cofactor. Thiamine diphosphate is required as a cofactor.

The enzyme catalyses isochorismate + 2-oxoglutarate + H(+) = 5-enolpyruvoyl-6-hydroxy-2-succinyl-cyclohex-3-ene-1-carboxylate + CO2. It functions in the pathway quinol/quinone metabolism; 1,4-dihydroxy-2-naphthoate biosynthesis; 1,4-dihydroxy-2-naphthoate from chorismate: step 2/7. Its pathway is quinol/quinone metabolism; menaquinone biosynthesis. Its function is as follows. Catalyzes the thiamine diphosphate-dependent decarboxylation of 2-oxoglutarate and the subsequent addition of the resulting succinic semialdehyde-thiamine pyrophosphate anion to isochorismate to yield 2-succinyl-5-enolpyruvyl-6-hydroxy-3-cyclohexene-1-carboxylate (SEPHCHC). This chain is 2-succinyl-5-enolpyruvyl-6-hydroxy-3-cyclohexene-1-carboxylate synthase, found in Haemophilus influenzae (strain PittGG).